The following is a 534-amino-acid chain: MQRRDFIRNASLALAAFGLPSLPACAASRSGQMGLRRLGQPQPFDFATLKGQARALAQAPYKSHKRVLPGRLEGLDWDQYQSIGYRQDHALWADQPGKFQAKFFHLGLYFHSPVRMFDVVDGKAQELAYDGAAFNYGKSGIKDGELPADLGFAGFRLNTRKDTDRDFAAFLGASYFRAVGKEGQYGQSARGLAIDTGMGKPEEFPDFIAYYLEQPSADSDTIVVYGLLDSPSVAGAYRFAITNGDVLLMDIDSALYPRKAIERLGIAPCTSMYQVGENDRRMAWDWRPEIHDTDGLSLWTGAGEWIWRPLLNPRNLRFNMFVDRNPRGFGLLQRDRNFDHYQDDGVFYEKRPCLWVEPKGEWGEGSVQLVEIPTVDETFDNIVAFWNPKEKPQPGQELLVGYRLYWGAEPPARPPLAHCVASRTGLGGVVGKKREYFSWRFAVDFEGGELARLIDKGEVEAVVEASRGRVEIVSARPLREINGYRAMFDLVPPEGSTEQIDIRLFLRSGGKTLTETWLYQYTPPPAGAPERTLY.

Residues 1–26 (MQRRDFIRNASLALAAFGLPSLPACA) constitute a signal peptide (tat-type signal).

Belongs to the OpgD/OpgG family. In terms of processing, predicted to be exported by the Tat system. The position of the signal peptide cleavage has not been experimentally proven.

The protein resides in the periplasm. It functions in the pathway glycan metabolism; osmoregulated periplasmic glucan (OPG) biosynthesis. In terms of biological role, probably involved in the control of the structural glucose backbone of osmoregulated periplasmic glucans (OPGs). The protein is Glucans biosynthesis protein D of Stenotrophomonas maltophilia (strain K279a).